The primary structure comprises 379 residues: PqqA peptide cyclase (379 aa).

Residues 8–220 (LPAPIGLLAE…IRVVEEARER (213 aa)) enclose the Radical SAM core domain. [4Fe-4S] cluster contacts are provided by cysteine 22, cysteine 26, and cysteine 29.

The protein belongs to the radical SAM superfamily. PqqE family. In terms of assembly, interacts with PqqD. The interaction is necessary for activity of PqqE. [4Fe-4S] cluster serves as cofactor.

It carries out the reaction [PQQ precursor protein] + S-adenosyl-L-methionine = E-Y cross-linked-[PQQ precursor protein] + 5'-deoxyadenosine + L-methionine + H(+). It functions in the pathway cofactor biosynthesis; pyrroloquinoline quinone biosynthesis. In terms of biological role, catalyzes the cross-linking of a glutamate residue and a tyrosine residue in the PqqA protein as part of the biosynthesis of pyrroloquinoline quinone (PQQ). The polypeptide is PqqA peptide cyclase (Methylobacterium sp. (strain 4-46)).